The sequence spans 240 residues: 1-(5-phosphoribosyl)-5-[(5-phosphoribosylamino)methylideneamino] imidazole-4-carboxamide isomerase (240 aa).

Asp8 serves as the catalytic Proton acceptor. Asp129 serves as the catalytic Proton donor.

This sequence belongs to the HisA/HisF family.

The protein localises to the cytoplasm. It catalyses the reaction 1-(5-phospho-beta-D-ribosyl)-5-[(5-phospho-beta-D-ribosylamino)methylideneamino]imidazole-4-carboxamide = 5-[(5-phospho-1-deoxy-D-ribulos-1-ylimino)methylamino]-1-(5-phospho-beta-D-ribosyl)imidazole-4-carboxamide. The protein operates within amino-acid biosynthesis; L-histidine biosynthesis; L-histidine from 5-phospho-alpha-D-ribose 1-diphosphate: step 4/9. The chain is 1-(5-phosphoribosyl)-5-[(5-phosphoribosylamino)methylideneamino] imidazole-4-carboxamide isomerase from Herpetosiphon aurantiacus (strain ATCC 23779 / DSM 785 / 114-95).